Consider the following 1296-residue polypeptide: MAHFSSEDEVMLQAMLRQLFQSVKEKITGAPSLECAEEILLRLEETDENFHNYEFVKYLRQHICNMLGSMIEEEMEKCTSDQNQGEDSGYDTVVQHVTKRTQESKEYKEMMHSLKNIMMVVVEAMINKFEEDETRSEDRQRKMQSGSCCTDNCSDSDSSFNQSYKFCQGKLRLILDQLDPGQPKEVRYEALQTLCSAPPSDVLSCENWTTLCEKLTTSLSDPDPMFTDRILKFYAQTFTLSPLHMTKEIYTSLAKYLEVYFLSRENHLPTLSTGVDITSPNVTRLLKKVRLLNEYQKEAPSFWIRHPEKYMEEIVESTLSLLSVKHEQSHLVPQKILDPIYFFALVDTKAVWFKKWMHAYYSRTAVLRLLEKKYKCLITTAVQQCVQYLELCEAMKADEILRHPKHCGTKQKSFYYSGQELQYIYFIHSLCLLGRLLIYTQGRKLFPIKLKNRKDSVSLTNLLVLFTQLIYYSPSCPKMTSIMCSENYSPASMVTDVLRMLCDQKECAVECLYNSTVTEALLLPIHNLTKGTAAAPDCSETALIHIADILARIASVEEGLILLLYGENMNSSEEESLTGAHIIAKFSKKLLEEDISIFSGSEMLPVVKGAFISVCRQIYGTCEGLQVLLPYGLHESIAKAWKKTSLLSERIPTPVEGSDSVSSVSQVSPNSVAWEDNLLDDLLNFAATPKGLLLLQRTGAINECVTFMLSQYAKKPQVNRQKKFGYEVLVVQVASTAAGAVALQNSGFISALITELWSNLECGRDDVRLTHPRATPVDPIDRSCQKSFLALVNLLSYPAVYELTANQELPNKAEYSLREVPTCIIDIMDRLIVLNSEAKIRSLLNYEQSHTFGLRLLSVVCCDLDALLLLEAQYQVSNMLLHAQEENTFEISENHRNFIIDGLSVERNHVLVRINLIGGPSERILPPRMLEKGDDPYPWPMFSSYPLPHCYQSEGPRSADLKQDNDIGNLLSCFKMSDKQTEWIENCRRQFCKTMKSKPDAVHGSALGELLEKFVLLLTENPSECYFPSVEYTATDANVKNESLSSVQQLGMKMTVRYGRFLNLLKDGAENELALVLKHCEKFLKQQQSPVTSSLLCLQGNYAGHDWFVSSLFMIMLGDKGKTFHFLQHFSRLLTSAFLWVPRLHNSRYLPVDTLGTGIHPIYFCSAHYIEMLLKAEVPLVFSAFHMSGFAPSQICLQWITQCFWNYLDWIEICHYIATCVVLGPDYQVYVCIAVLKHLQRDILQHTQTQDLQVFLKEEALHGFRVSNYFEYMENLEQNYRPVLLRDMRSIRVQNT.

The Rab-GAP TBC domain maps to 1158–1281 (GIHPIYFCSA…YMENLEQNYR (124 aa)).

In terms of assembly, interacts with CDK20, which promotes CDK20 stability and function. Interacts with FAM149B1; may play a role in cilium assembly.

The protein resides in the cytoplasm. Its subcellular location is the cell projection. The protein localises to the cilium. Its function is as follows. Required for high-level Shh responses in the developing neural tube. Together with CDK20, controls the structure of the primary cilium by coordinating assembly of the ciliary membrane and axoneme, allowing GLI2 to be properly activated in response to Shh signaling. This is Protein broad-minded (Tbc1d32) from Mus musculus (Mouse).